Here is a 158-residue protein sequence, read N- to C-terminus: NAD(P)H-quinone oxidoreductase subunit J, chloroplastic (158 aa).

The protein belongs to the complex I 30 kDa subunit family. NDH is composed of at least 16 different subunits, 5 of which are encoded in the nucleus.

Its subcellular location is the plastid. It localises to the chloroplast thylakoid membrane. The catalysed reaction is a plastoquinone + NADH + (n+1) H(+)(in) = a plastoquinol + NAD(+) + n H(+)(out). It catalyses the reaction a plastoquinone + NADPH + (n+1) H(+)(in) = a plastoquinol + NADP(+) + n H(+)(out). Functionally, NDH shuttles electrons from NAD(P)H:plastoquinone, via FMN and iron-sulfur (Fe-S) centers, to quinones in the photosynthetic chain and possibly in a chloroplast respiratory chain. The immediate electron acceptor for the enzyme in this species is believed to be plastoquinone. Couples the redox reaction to proton translocation, and thus conserves the redox energy in a proton gradient. In Cryptomeria japonica (Japanese cedar), this protein is NAD(P)H-quinone oxidoreductase subunit J, chloroplastic.